Here is a 438-residue protein sequence, read N- to C-terminus: Glutamyl-tRNA reductase (438 aa).

Substrate-binding positions include 49 to 52 (TCNR), Ser-109, 114 to 116 (EGQ), and Gln-120. The active-site Nucleophile is Cys-50. Residue 197-202 (GAGKMS) participates in NADP(+) binding.

Belongs to the glutamyl-tRNA reductase family. As to quaternary structure, homodimer.

It catalyses the reaction (S)-4-amino-5-oxopentanoate + tRNA(Glu) + NADP(+) = L-glutamyl-tRNA(Glu) + NADPH + H(+). The protein operates within porphyrin-containing compound metabolism; protoporphyrin-IX biosynthesis; 5-aminolevulinate from L-glutamyl-tRNA(Glu): step 1/2. It participates in porphyrin-containing compound metabolism; chlorophyll biosynthesis. In terms of biological role, catalyzes the NADPH-dependent reduction of glutamyl-tRNA(Glu) to glutamate 1-semialdehyde (GSA). The sequence is that of Glutamyl-tRNA reductase from Synechococcus elongatus (strain ATCC 33912 / PCC 7942 / FACHB-805) (Anacystis nidulans R2).